Here is a 705-residue protein sequence, read N- to C-terminus: Fatty acid oxidation complex subunit alpha (705 aa).

The enoyl-CoA hydratase stretch occupies residues 1-188; sequence MGKTFNLTRR…KMGLVNDVVP (188 aa). The segment at 308-705 is 3-hydroxyacyl-CoA dehydrogenase; sequence RKVKKAVILG…AMAAEKARFF (398 aa).

This sequence in the N-terminal section; belongs to the enoyl-CoA hydratase/isomerase family. The protein in the central section; belongs to the 3-hydroxyacyl-CoA dehydrogenase family. Heterotetramer of two alpha chains (FadJ) and two beta chains (FadI).

The protein resides in the cytoplasm. The enzyme catalyses a (3S)-3-hydroxyacyl-CoA = a (2E)-enoyl-CoA + H2O. It catalyses the reaction a 4-saturated-(3S)-3-hydroxyacyl-CoA = a (3E)-enoyl-CoA + H2O. The catalysed reaction is a (3S)-3-hydroxyacyl-CoA + NAD(+) = a 3-oxoacyl-CoA + NADH + H(+). It carries out the reaction (3S)-3-hydroxybutanoyl-CoA = (3R)-3-hydroxybutanoyl-CoA. It functions in the pathway lipid metabolism; fatty acid beta-oxidation. Its function is as follows. Catalyzes the formation of a hydroxyacyl-CoA by addition of water on enoyl-CoA. Also exhibits 3-hydroxyacyl-CoA epimerase and 3-hydroxyacyl-CoA dehydrogenase activities. The polypeptide is Fatty acid oxidation complex subunit alpha (Shewanella oneidensis (strain ATCC 700550 / JCM 31522 / CIP 106686 / LMG 19005 / NCIMB 14063 / MR-1)).